The chain runs to 335 residues: Biotin synthase (335 aa).

The Radical SAM core domain occupies 50 to 279 (ADIQRAALLS…KARVRLSAGR (230 aa)). Cys-65, Cys-69, and Cys-72 together coordinate [4Fe-4S] cluster. Residues Cys-110, Cys-142, Cys-202, and Arg-274 each contribute to the [2Fe-2S] cluster site.

This sequence belongs to the radical SAM superfamily. Biotin synthase family. Homodimer. Requires [4Fe-4S] cluster as cofactor. The cofactor is [2Fe-2S] cluster.

It catalyses the reaction (4R,5S)-dethiobiotin + (sulfur carrier)-SH + 2 reduced [2Fe-2S]-[ferredoxin] + 2 S-adenosyl-L-methionine = (sulfur carrier)-H + biotin + 2 5'-deoxyadenosine + 2 L-methionine + 2 oxidized [2Fe-2S]-[ferredoxin]. It functions in the pathway cofactor biosynthesis; biotin biosynthesis; biotin from 7,8-diaminononanoate: step 2/2. In terms of biological role, catalyzes the conversion of dethiobiotin (DTB) to biotin by the insertion of a sulfur atom into dethiobiotin via a radical-based mechanism. This Methylorubrum extorquens (strain CM4 / NCIMB 13688) (Methylobacterium extorquens) protein is Biotin synthase.